Consider the following 909-residue polypeptide: Glucan endo-1,3-beta-D-glucosidase ARB_01444 (909 aa).

A signal peptide spans 1 to 23; that stretch reads MKPYTTLPGVAVLVSLLTQSAHA. Residues 136-187 form a disordered region; that stretch reads KRSPAPQRHPPAPTKATAGYQFTNCTSTSNPGPTATSPTSGIPSQPSAPPAT. Residues 155–180 show a composition bias toward polar residues; sequence YQFTNCTSTSNPGPTATSPTSGIPSQ. 3 N-linked (GlcNAc...) asparagine glycosylation sites follow: N159, N239, and N259. Residues 191 to 430 are beta-sandwich subdomain; the sequence is QDIFQPIAKD…KGVIQVAKNP (240 aa). The 719-residue stretch at 191-909 folds into the GH81 domain; it reads QDIFQPIAKD…AGEYSTYIAL (719 aa). The interval 431-524 is alpha/beta subdomain; the sequence is SAEEGEGIYD…GDSWTMVEGN (94 aa). The tract at residues 539 to 909 is (alpha/beta)6 barrel subdomain; it reads SSQVTLSEGA…AGEYSTYIAL (371 aa). D654 is a catalytic residue. Positions 658, 727, 729, and 733 each coordinate (1,3-beta-D-glucosyl)n. Catalysis depends on residues E729 and E733. A may provide specificity for triple-helical beta-glucan region spans residues 798–800; it reads KID. Y811 is a binding site for (1,3-beta-D-glucosyl)n.

This sequence belongs to the glycosyl hydrolase 81 family.

It localises to the secreted. It is found in the cell wall. The enzyme catalyses Hydrolysis of (1-&gt;3)-beta-D-glucosidic linkages in (1-&gt;3)-beta-D-glucans.. Its function is as follows. Cleaves internal linkages in 1,3-beta-glucan. Probably involved in cell separation after cytokinesis. The polypeptide is Glucan endo-1,3-beta-D-glucosidase ARB_01444 (Arthroderma benhamiae (strain ATCC MYA-4681 / CBS 112371) (Trichophyton mentagrophytes)).